Reading from the N-terminus, the 381-residue chain is Succinate--CoA ligase [ADP-forming] subunit beta (381 aa).

The ATP-grasp domain maps to 9–236 (KELLRVAGVP…ESSEAPSEVD (228 aa)). Residues lysine 45, 52–54 (GRG), alanine 94, and glutamate 99 each bind ATP. Residues asparagine 191 and aspartate 205 each contribute to the Mg(2+) site. Residues asparagine 256 and 313-315 (GIT) contribute to the substrate site.

This sequence belongs to the succinate/malate CoA ligase beta subunit family. Heterotetramer of two alpha and two beta subunits. Mg(2+) is required as a cofactor.

It carries out the reaction succinate + ATP + CoA = succinyl-CoA + ADP + phosphate. The catalysed reaction is GTP + succinate + CoA = succinyl-CoA + GDP + phosphate. Its pathway is carbohydrate metabolism; tricarboxylic acid cycle; succinate from succinyl-CoA (ligase route): step 1/1. In terms of biological role, succinyl-CoA synthetase functions in the citric acid cycle (TCA), coupling the hydrolysis of succinyl-CoA to the synthesis of either ATP or GTP and thus represents the only step of substrate-level phosphorylation in the TCA. The beta subunit provides nucleotide specificity of the enzyme and binds the substrate succinate, while the binding sites for coenzyme A and phosphate are found in the alpha subunit. This is Succinate--CoA ligase [ADP-forming] subunit beta from Gemmatimonas aurantiaca (strain DSM 14586 / JCM 11422 / NBRC 100505 / T-27).